The following is a 395-amino-acid chain: General transcription factor IIH subunit 2 (395 aa).

One can recognise a VWFA domain in the interval 60-236; that stretch reads HLYVVVDGSR…HYKELLTHHV (177 aa). Tyr95 is subject to Phosphotyrosine. The C4-type zinc-finger motif lies at 291–308; the sequence is CPQCRAKYCELPVECKIC.

This sequence belongs to the GTF2H2 family. In terms of assembly, component of the TFIID-containing RNA polymerase II pre-initiation complex that is composed of TBP and at least GTF2A1, GTF2A2, GTF2E1, GTF2E2, GTF2F1, GTF2H2, GTF2H3, GTF2H4, GTF2H5, GTF2B, TCEA1, ERCC2 and ERCC3. Component of the 7-subunit TFIIH core complex composed of XPB/ERCC3, XPD/ERCC2, GTF2H1, GTF2H2, GTF2H3, GTF2H4 and GTF2H5, which is active in NER. The core complex associates with the 3-subunit CDK-activating kinase (CAK) module composed of CCNH/cyclin H, CDK7 and MNAT1 to form the 10-subunit holoenzyme (holo-TFIIH) active in transcription. Interacts with XPB, XPD, GTF2H1 and GTF2H3.

The protein resides in the nucleus. Its function is as follows. Component of the general transcription and DNA repair factor IIH (TFIIH) core complex, which is involved in general and transcription-coupled nucleotide excision repair (NER) of damaged DNA and, when complexed to CAK, in RNA transcription by RNA polymerase II. In NER, TFIIH acts by opening DNA around the lesion to allow the excision of the damaged oligonucleotide and its replacement by a new DNA fragment. In transcription, TFIIH has an essential role in transcription initiation. When the pre-initiation complex (PIC) has been established, TFIIH is required for promoter opening and promoter escape. Phosphorylation of the C-terminal tail (CTD) of the largest subunit of RNA polymerase II by the kinase module CAK controls the initiation of transcription. The N-terminus of GTF2H2 interacts with and regulates XPD whereas an intact C-terminus is required for a successful escape of RNAP II form the promoter. The chain is General transcription factor IIH subunit 2 (GTF2H2) from Bos taurus (Bovine).